The primary structure comprises 88 residues: Molybdopterin synthase sulfur carrier subunit (88 aa).

G88 carries the post-translational modification 1-thioglycine; alternate. A Glycyl adenylate; alternate modification is found at G88.

This sequence belongs to the MoaD family. MOCS2A subfamily. In terms of assembly, heterotetramer; composed of 2 small (MOCS2A) and 2 large (MOCS2B) subunits. C-terminal thiocarboxylation occurs in 2 steps, it is first acyl-adenylated (-COAMP) via the hesA/moeB/thiF part of MOCS3, then thiocarboxylated (-COSH) via the rhodanese domain of MOCS3.

The protein resides in the cytoplasm. Its subcellular location is the cytosol. The protein operates within cofactor biosynthesis; molybdopterin biosynthesis. Functionally, acts as a sulfur carrier required for molybdopterin biosynthesis. Component of the molybdopterin synthase complex that catalyzes the conversion of precursor Z into molybdopterin by mediating the incorporation of 2 sulfur atoms into precursor Z to generate a dithiolene group. In the complex, serves as sulfur donor by being thiocarboxylated (-COSH) at its C-terminus by MOCS3. After interaction with MOCS2B, the sulfur is then transferred to precursor Z to form molybdopterin. The chain is Molybdopterin synthase sulfur carrier subunit from Mus musculus (Mouse).